A 90-amino-acid chain; its full sequence is MICAIYSSPKREQTYLYVEKRDNFSRVPEELLKSFGQPQYTMMISLADRKKLAGADIEKVKISLIEQGFYLQIPPPVENLMNAHLSQMEK.

Residues 1–85 (MICAIYSSPK…PVENLMNAHL (85 aa)) form the YcgL domain.

The sequence is that of YcgL domain-containing protein plu2139 from Photorhabdus laumondii subsp. laumondii (strain DSM 15139 / CIP 105565 / TT01) (Photorhabdus luminescens subsp. laumondii).